A 520-amino-acid chain; its full sequence is Glucose-6-phosphate isomerase (520 aa).

Catalysis depends on glutamate 327, which acts as the Proton donor. Active-site residues include histidine 358 and lysine 486.

This sequence belongs to the GPI family.

It localises to the cytoplasm. The catalysed reaction is alpha-D-glucose 6-phosphate = beta-D-fructose 6-phosphate. Its pathway is carbohydrate biosynthesis; gluconeogenesis. It participates in carbohydrate degradation; glycolysis; D-glyceraldehyde 3-phosphate and glycerone phosphate from D-glucose: step 2/4. Catalyzes the reversible isomerization of glucose-6-phosphate to fructose-6-phosphate. The polypeptide is Glucose-6-phosphate isomerase (Bordetella avium (strain 197N)).